A 179-amino-acid polypeptide reads, in one-letter code: Large ribosomal subunit protein uL5 (179 aa).

Belongs to the universal ribosomal protein uL5 family. Part of the 50S ribosomal subunit; part of the 5S rRNA/L5/L18/L25 subcomplex. Contacts the 5S rRNA and the P site tRNA. Forms a bridge to the 30S subunit in the 70S ribosome.

Its function is as follows. This is one of the proteins that bind and probably mediate the attachment of the 5S RNA into the large ribosomal subunit, where it forms part of the central protuberance. In the 70S ribosome it contacts protein S13 of the 30S subunit (bridge B1b), connecting the 2 subunits; this bridge is implicated in subunit movement. Contacts the P site tRNA; the 5S rRNA and some of its associated proteins might help stabilize positioning of ribosome-bound tRNAs. This is Large ribosomal subunit protein uL5 from Enterobacter sp. (strain 638).